A 528-amino-acid chain; its full sequence is Importin subunit alpha-7 (528 aa).

The 56-residue stretch at 1–56 (MKGGETMSVRRSGYKAVVDGVGGRRRREDDMVEIRKAKREESLLKKRREALPHSPS) folds into the IBB domain. ARM repeat units lie at residues 93 to 133 (NVRV…NIAS), 136 to 175 (SENT…NISG), 178 to 218 (PRCR…NLCR), 220 to 259 (KPQP…YLSD), 262 to 301 (NEKI…NIVT), 304 to 344 (DSQT…NITA), 347 to 386 (QSQI…NAIA), and 390 to 429 (YKQI…KILK).

The protein belongs to the importin alpha family. As to quaternary structure, forms a complex with importin subunit beta-1.

The protein localises to the nucleus envelope. Binds to conventional NLS motifs and mediates nuclear protein import across the nuclear envelope. Acts as a cellular receptor for the nuclear import of the virD2 protein of Agrobacterium, but is not essential for Agrobacterium-mediated root transformation. The sequence is that of Importin subunit alpha-7 from Arabidopsis thaliana (Mouse-ear cress).